The chain runs to 629 residues: Microtubule-associated protein 70-3 (629 aa).

The segment at 1–54 (MEEGGYAFEVNNGRPTASEFGTTARISSPSLTMSSSFREGGGGGGSKGLTRRRS) is disordered. Over residues 13–33 (GRPTASEFGTTARISSPSLTM) the composition is skewed to polar residues. The stretch at 75 to 375 (VKVELNRLEN…ADRAAKSEAQ (301 aa)) forms a coiled coil. The tract at residues 257 to 493 (ILDKLHRQKV…FPLNQSSEGT (237 aa)) is required for targeting to microtubules. Disordered regions lie at residues 391-421 (LRGP…LGGA), 458-519 (GTSR…DSVP), and 578-629 (AMEK…RSTQ). Residues 393 to 416 (GPSSSGNRSTPEGRSMSNGPSRRQ) show a composition bias toward polar residues. Residues 544 to 592 (LRDKDEAIEMLAKKVETLTKAMEVEAKKMRREVAAMEKEVSAMRVDNKG) are a coiled coil. Over residues 578–596 (AMEKEVSAMRVDNKGSDSR) the composition is skewed to basic and acidic residues. The span at 603–613 (NSKGASTTAQL) shows a compositional bias: polar residues.

It belongs to the MAP70 family.

The protein resides in the cytoplasm. Its subcellular location is the cytoskeleton. In terms of biological role, plant-specific protein that interact with microtubules. The chain is Microtubule-associated protein 70-3 (MAP70.3) from Arabidopsis thaliana (Mouse-ear cress).